The chain runs to 152 residues: Protein-export protein SecB (152 aa).

The protein belongs to the SecB family. In terms of assembly, homotetramer, a dimer of dimers. One homotetramer interacts with 1 SecA dimer.

It localises to the cytoplasm. In terms of biological role, one of the proteins required for the normal export of preproteins out of the cell cytoplasm. It is a molecular chaperone that binds to a subset of precursor proteins, maintaining them in a translocation-competent state. It also specifically binds to its receptor SecA. In Dechloromonas aromatica (strain RCB), this protein is Protein-export protein SecB.